Reading from the N-terminus, the 101-residue chain is Small ribosomal subunit protein uS14 (101 aa).

The protein belongs to the universal ribosomal protein uS14 family. Part of the 30S ribosomal subunit. Contacts proteins S3 and S10.

Its function is as follows. Binds 16S rRNA, required for the assembly of 30S particles and may also be responsible for determining the conformation of the 16S rRNA at the A site. The chain is Small ribosomal subunit protein uS14 from Chlamydia abortus (strain DSM 27085 / S26/3) (Chlamydophila abortus).